The sequence spans 1828 residues: Protein TIC 214 (1828 aa).

Helical transmembrane passes span 18-38 (IINS…FSIG), 64-84 (FITG…HLAM), 87-107 (PYTI…WKNH), 124-144 (FSIQ…HFVL), 172-192 (VGWL…LFWI), and 222-242 (VNIF…SPIL). A compositionally biased stretch (basic and acidic residues) spans 270-279 (SEAKETKQEQ). Disordered regions lie at residues 270-301 (SEAK…PNKL), 618-637 (DLQQ…HAIR), 741-763 (EFKT…EDKK), and 1533-1571 (KEEF…RQSK). Basic and acidic residues predominate over residues 1550 to 1562 (KDVEKDYAKSDIK).

The protein belongs to the TIC214 family. In terms of assembly, part of the Tic complex.

It localises to the plastid. Its subcellular location is the chloroplast inner membrane. Functionally, involved in protein precursor import into chloroplasts. May be part of an intermediate translocation complex acting as a protein-conducting channel at the inner envelope. The chain is Protein TIC 214 from Calycanthus floridus var. glaucus (Eastern sweetshrub).